Consider the following 541-residue polypeptide: Chaperonin GroEL 2 (541 aa).

ATP contacts are provided by residues 29 to 32 (TLGP), 86 to 90 (DGTTT), glycine 413, 476 to 478 (NAA), and aspartate 492.

It belongs to the chaperonin (HSP60) family. As to quaternary structure, forms a cylinder of 14 subunits composed of two heptameric rings stacked back-to-back. Interacts with the co-chaperonin GroES.

It is found in the secreted. The protein localises to the capsule. It localises to the cell surface. Its subcellular location is the cell wall. The enzyme catalyses ATP + H2O + a folded polypeptide = ADP + phosphate + an unfolded polypeptide.. In terms of biological role, together with its co-chaperonin GroES, plays an essential role in assisting protein folding. The GroEL-GroES system forms a nano-cage that allows encapsulation of the non-native substrate proteins and provides a physical environment optimized to promote and accelerate protein folding. The chain is Chaperonin GroEL 2 from Mycobacterium leprae (strain TN).